The following is a 168-amino-acid chain: Disulfide bond formation protein B (168 aa).

Topologically, residues 1 to 11 (MSNPMRPVRSI) are cytoplasmic. The chain crosses the membrane as a helical span at residues 12 to 28 (LLAIFTGCAGLIGYALY). The Periplasmic segment spans residues 29-46 (LQLVENLLPCPLCVVQRM). Cys-38 and Cys-41 are joined by a disulfide. Residues 47 to 63 (AYWLIGLTALAGFFHTP) form a helical membrane-spanning segment. At 64–69 (ETTGRR) the chain is on the cytoplasmic side. The chain crosses the membrane as a helical span at residues 70–87 (IYAGLMAVFAFTGGLVAL). Topologically, residues 88 to 143 (RQAWLVRYPEAFECGISPEEAFLNALPLARWWPVMFEANGDCADVTWKFASLTLPD) are periplasmic. Cys-101 and Cys-129 are oxidised to a cystine. Residues 144 to 162 (WSAIFFMILAALSIYVLLV) traverse the membrane as a helical segment. The Cytoplasmic segment spans residues 163–168 (RENQRE).

Belongs to the DsbB family.

It is found in the cell inner membrane. Required for disulfide bond formation in some periplasmic proteins. Acts by oxidizing the DsbA protein. The sequence is that of Disulfide bond formation protein B from Nitrosospira multiformis (strain ATCC 25196 / NCIMB 11849 / C 71).